A 435-amino-acid chain; its full sequence is Metacaspase-1A (435 aa).

Disordered regions lie at residues 1-46 (MQNH…APPP) and 106-129 (YQNP…VAFG). Positions 36–46 (SPQPGYGAPPP) are enriched in pro residues. Catalysis depends on residues His231 and Cys287.

It belongs to the peptidase C14B family.

Involved in cell death (apoptosis). The protein is Metacaspase-1A (casA) of Neosartorya fischeri (strain ATCC 1020 / DSM 3700 / CBS 544.65 / FGSC A1164 / JCM 1740 / NRRL 181 / WB 181) (Aspergillus fischerianus).